We begin with the raw amino-acid sequence, 214 residues long: Ribosomal RNA large subunit methyltransferase E (214 aa).

S-adenosyl-L-methionine contacts are provided by glycine 60, tryptophan 62, aspartate 86, aspartate 102, and aspartate 127. Lysine 167 (proton acceptor) is an active-site residue.

Belongs to the class I-like SAM-binding methyltransferase superfamily. RNA methyltransferase RlmE family.

It localises to the cytoplasm. The catalysed reaction is uridine(2552) in 23S rRNA + S-adenosyl-L-methionine = 2'-O-methyluridine(2552) in 23S rRNA + S-adenosyl-L-homocysteine + H(+). Its function is as follows. Specifically methylates the uridine in position 2552 of 23S rRNA at the 2'-O position of the ribose in the fully assembled 50S ribosomal subunit. The polypeptide is Ribosomal RNA large subunit methyltransferase E (Janthinobacterium sp. (strain Marseille) (Minibacterium massiliensis)).